The sequence spans 101 residues: Small ribosomal subunit protein uS14 (101 aa).

Belongs to the universal ribosomal protein uS14 family. As to quaternary structure, part of the 30S ribosomal subunit. Contacts proteins S3 and S10.

Its function is as follows. Binds 16S rRNA, required for the assembly of 30S particles and may also be responsible for determining the conformation of the 16S rRNA at the A site. The chain is Small ribosomal subunit protein uS14 from Ralstonia pickettii (strain 12J).